A 396-amino-acid polypeptide reads, in one-letter code: Putative transposase y4rJ (396 aa).

This sequence belongs to the transposase 20 family.

This is Putative transposase y4rJ from Sinorhizobium fredii (strain NBRC 101917 / NGR234).